A 448-amino-acid chain; its full sequence is Glutamyl-tRNA reductase (448 aa).

Residues 49 to 52 (TCNR), serine 109, 114 to 116 (ETQ), and glutamine 120 contribute to the substrate site. The active-site Nucleophile is cysteine 50. 189–194 (GAGEMS) serves as a coordination point for NADP(+).

Belongs to the glutamyl-tRNA reductase family. Homodimer.

The enzyme catalyses (S)-4-amino-5-oxopentanoate + tRNA(Glu) + NADP(+) = L-glutamyl-tRNA(Glu) + NADPH + H(+). Its pathway is porphyrin-containing compound metabolism; protoporphyrin-IX biosynthesis; 5-aminolevulinate from L-glutamyl-tRNA(Glu): step 1/2. In terms of biological role, catalyzes the NADPH-dependent reduction of glutamyl-tRNA(Glu) to glutamate 1-semialdehyde (GSA). In Staphylococcus aureus (strain bovine RF122 / ET3-1), this protein is Glutamyl-tRNA reductase.